A 106-amino-acid polypeptide reads, in one-letter code: MSANNMSDPRRPNKVLRYKPPPSECNPALDDPTPDYMNLLGMIFSMCGLMLKLKWCAWVAVYCSFISFANSRSSEDTKQMMSSFMLSISAVVMSYLQNPQPMTPPW.

The segment at 1–29 (MSANNMSDPRRPNKVLRYKPPPSECNPAL) is disordered. Ser2 bears the N-acetylserine mark. The Cytoplasmic portion of the chain corresponds to 2–32 (SANNMSDPRRPNKVLRYKPPPSECNPALDDP). A helical transmembrane segment spans residues 33-51 (TPDYMNLLGMIFSMCGLML). Position 52 (Lys52) is a topological domain, lumenal. A helical transmembrane segment spans residues 53 to 70 (LKWCAWVAVYCSFISFAN). The Cytoplasmic segment spans residues 71 to 74 (SRSS). A helical transmembrane segment spans residues 75-95 (EDTKQMMSSFMLSISAVVMSY). The Lumenal segment spans residues 96–106 (LQNPQPMTPPW).

Belongs to the Asterix family. In terms of assembly, component of the PAT complex, composed of WDR83OS/Asterix and CCDC47. The PAT complex is part of the multi-pass translocon (MPT) complex, composed of three subcomplexes, the GEL complex (composed of RAB5IF/OPTI and TMCO1), the BOS complex (composed of NCLN/Nicalin, NOMO1 and TMEM147) and the PAT complex (composed of WDR83OS/Asterix and CCDC47). The MPT complex associates with the SEC61 complex.

It is found in the endoplasmic reticulum membrane. Its function is as follows. Component of the multi-pass translocon (MPT) complex that mediates insertion of multi-pass membrane proteins into the lipid bilayer of membranes. The MPT complex takes over after the SEC61 complex: following membrane insertion of the first few transmembrane segments of proteins by the SEC61 complex, the MPT complex occludes the lateral gate of the SEC61 complex to promote insertion of subsequent transmembrane regions. Within the MPT complex, the PAT subcomplex sequesters any highly polar regions in the transmembrane domains away from the non-polar membrane environment until they can be buried in the interior of the fully assembled protein. Within the PAT subcomplex, WDR83OS/Asterix binds to and redirects the substrate to a location behind the SEC61 complex. The protein is PAT complex subunit Asterix (WDR83OS) of Bos taurus (Bovine).